Here is a 242-residue protein sequence, read N- to C-terminus: 3-dehydroquinate dehydratase (242 aa).

Residues 39–41 (EIR) and arginine 73 each bind 3-dehydroquinate. Histidine 135 serves as the catalytic Proton donor/acceptor. The active-site Schiff-base intermediate with substrate is the lysine 162. 3-dehydroquinate-binding residues include arginine 203 and glutamine 228.

It belongs to the type-I 3-dehydroquinase family. Homodimer.

It carries out the reaction 3-dehydroquinate = 3-dehydroshikimate + H2O. Its pathway is metabolic intermediate biosynthesis; chorismate biosynthesis; chorismate from D-erythrose 4-phosphate and phosphoenolpyruvate: step 3/7. Its function is as follows. Involved in the third step of the chorismate pathway, which leads to the biosynthesis of aromatic amino acids. Catalyzes the cis-dehydration of 3-dehydroquinate (DHQ) and introduces the first double bond of the aromatic ring to yield 3-dehydroshikimate. The polypeptide is 3-dehydroquinate dehydratase (Methanosarcina barkeri (strain Fusaro / DSM 804)).